Consider the following 129-residue polypeptide: uncharacterized protein (129 aa).

Positions 1–20 (MIYPLFRICILGAFLLGSYA) are cleaved as a signal peptide.

This is an uncharacterized protein from Saccharomyces cerevisiae (strain ATCC 204508 / S288c) (Baker's yeast).